A 1003-amino-acid polypeptide reads, in one-letter code: Phosphatidylinositol 4,5-bisphosphate 5-phosphatase A (1003 aa).

2 disordered regions span residues 1–110 (MEGQ…AAKS) and 147–414 (AMPR…QPTC). The short motif at 6 to 11 (RSGSAR) is the RSXSXX motif 1 element. The segment covering 11–24 (RPGTRTGLGPLPGT) has biased composition (low complexity). Arg56 is modified (asymmetric dimethylarginine; alternate). Omega-N-methylarginine; alternate is present on Arg56. Arg65 carries the post-translational modification Omega-N-methylarginine. Arg76 carries the post-translational modification Asymmetric dimethylarginine. Residue Arg83 is modified to Asymmetric dimethylarginine; alternate. Arg83 bears the Omega-N-methylarginine; alternate mark. The segment covering 160–174 (LTPTSRDQKQLSPTS) has biased composition (polar residues). At Ser171 the chain carries Phosphoserine. The segment covering 180–196 (ALATSGLSLALASQEQP) has biased composition (low complexity). Positions 197–210 (PQSPSSPSPVPSPV) are enriched in pro residues. Basic and acidic residues predominate over residues 284–294 (ARPEAPRHSPE). Phosphoserine occurs at positions 292 and 325. Residues 338 to 348 (VPPPLPKPPRS) are compositionally biased toward pro residues. Positions 346-351 (PRSPSR) match the SH3-binding motif. Low complexity-rich tracts occupy residues 349–361 (PSRS…NRSP) and 390–413 (QAQE…AQPT). The RSXSXX motif 2 motif lies at 351 to 356 (RSPSRS). Positions 422–725 (ITVVTWNVGT…SDHKPVAAQF (304 aa)) are catalytic. Positions 726-837 (ILQFAFRDDV…IGVTEPFQIS (112 aa)) are required for ruffle localization. The tract at residues 839–1003 (PTSESASSST…LGLEEGGLGP (165 aa)) is disordered. The segment covering 840–855 (TSESASSSTDSSGTSS) has biased composition (low complexity). Short sequence motifs (RSXSXX motif) lie at residues 871-876 (RSPSPG) and 882-887 (RSRSPG). At Ser900 the chain carries Phosphoserine. Composition is skewed to low complexity over residues 907–919 (SRSP…QLPR) and 927–943 (SSSS…GLPG). The RSXSXX motif 5 motif lies at 908–913 (RSPSPQ). Ser987 bears the Phosphoserine mark.

This sequence belongs to the inositol 1,4,5-trisphosphate 5-phosphatase type II family.

The protein localises to the cytoplasm. The catalysed reaction is 1D-myo-inositol 1,4,5-trisphosphate + H2O = 1D-myo-inositol 1,4-bisphosphate + phosphate. It catalyses the reaction 1D-myo-inositol 1,3,4,5-tetrakisphosphate + H2O = 1D-myo-inositol 1,3,4-trisphosphate + phosphate. The enzyme catalyses a 1,2-diacyl-sn-glycero-3-phospho-(1D-myo-inositol-4,5-bisphosphate) + H2O = a 1,2-diacyl-sn-glycero-3-phospho-(1D-myo-inositol 4-phosphate) + phosphate. In terms of biological role, inositol 5-phosphatase, which converts inositol 1,4,5-trisphosphate to inositol 1,4-bisphosphate. Also converts phosphatidylinositol 4,5-bisphosphate to phosphatidylinositol 4-phosphate and inositol 1,3,4,5-tetrakisphosphate to inositol 1,3,4-trisphosphate in vitro. May be involved in modulation of the function of inositol and phosphatidylinositol polyphosphate-binding proteins that are present at membranes ruffles. This chain is Phosphatidylinositol 4,5-bisphosphate 5-phosphatase A (Inpp5j), found in Mus musculus (Mouse).